The chain runs to 264 residues: Neurexophilin-2 (264 aa).

A signal peptide spans 1-22 (MRLRPLPLVVVPGLLQLLFCDS). The interval 23 to 90 (EKVVHATEGL…WDWLANITEV (68 aa)) is II. N-linked (GlcNAc...) asparagine glycans are attached at residues Asn-86, Asn-139, Asn-149, and Asn-155. The interval 91 to 169 (QEPLARTKRR…LVPPSKVVEF (79 aa)) is III. Residues 170-178 (EVSPQSTLE) are IV (linker domain). The interval 179–264 (TKESKSFNCR…HSETPYLSSG (86 aa)) is v (Cys-rich).

This sequence belongs to the neurexophilin family. In terms of processing, may be proteolytically processed at the boundary between the N-terminal non-conserved and the central conserved domain in neuron-like cells. As to expression, brain, only in a scattered subpopulation of neurons that probably represent inhibitory interneurons.

The protein localises to the secreted. Functionally, may be signaling molecules that resemble neuropeptides and that act by binding to alpha-neurexins and possibly other receptors. This chain is Neurexophilin-2 (NXPH2), found in Bos taurus (Bovine).